A 161-amino-acid chain; its full sequence is Large ribosomal subunit protein uL10 (161 aa).

Belongs to the universal ribosomal protein uL10 family. As to quaternary structure, part of the ribosomal stalk of the 50S ribosomal subunit. The N-terminus interacts with L11 and the large rRNA to form the base of the stalk. The C-terminus forms an elongated spine to which L12 dimers bind in a sequential fashion forming a multimeric L10(L12)X complex.

In terms of biological role, forms part of the ribosomal stalk, playing a central role in the interaction of the ribosome with GTP-bound translation factors. This is Large ribosomal subunit protein uL10 (rplJ) from Mycoplasma pneumoniae (strain ATCC 29342 / M129 / Subtype 1) (Mycoplasmoides pneumoniae).